We begin with the raw amino-acid sequence, 471 residues long: GTPase Der (471 aa).

EngA-type G domains are found at residues 5–168 and 186–359; these read PVIA…TDLE and IRVA…DSAF. Residues 11–18, 58–62, 120–123, 192–199, 239–243, and 304–307 contribute to the GTP site; these read GRPNVGKS, DTGGI, NKTD, DTAGV, and NKWD. Positions 360-444 constitute a KH-like domain; that stretch reads IKIGTNELTR…PIRLEFKSGT (85 aa).

The protein belongs to the TRAFAC class TrmE-Era-EngA-EngB-Septin-like GTPase superfamily. EngA (Der) GTPase family. Associates with the 50S ribosomal subunit.

In terms of biological role, GTPase that plays an essential role in the late steps of ribosome biogenesis. The chain is GTPase Der from Alcanivorax borkumensis (strain ATCC 700651 / DSM 11573 / NCIMB 13689 / SK2).